A 145-amino-acid polypeptide reads, in one-letter code: Transcriptional regulator SlyA (145 aa).

Residues 2 to 135 (ELPLGSDLAR…LALLVARLEK (134 aa)) enclose the HTH marR-type domain. Positions 49–72 (QIQLAKAIGIEQPSLVRTLDQLEE) form a DNA-binding region, H-T-H motif.

It belongs to the SlyA family. In terms of assembly, homodimer.

Functionally, transcription regulator that can specifically activate or repress expression of target genes. The protein is Transcriptional regulator SlyA of Pectobacterium atrosepticum (strain SCRI 1043 / ATCC BAA-672) (Erwinia carotovora subsp. atroseptica).